Consider the following 224-residue polypeptide: CRIB domain-containing protein RIC1 (224 aa).

A CRIB domain is found at I29–G42. Residues V38 to I224 form a disordered region. Polar residues-rich tracts occupy residues S69–R84, P114–D132, A144–E155, and S215–I224.

In terms of assembly, interacts with ARAC11/ROP1. As to expression, expressed in columella cells from the root tip and epidermal cells at the base of lateral roots, leaves, stems, flowers, anthers, pollen and siliques.

Its subcellular location is the cytoplasm. It localises to the cytoskeleton. Functions as a downstream effector of Rho-related GTP binding proteins of the 'Rho of Plants' (ROPs) family. Participates in the propagation of ROP GTPase signals in specific cellular responses. Required for cortical microtubule organization. Promotes microtubule bundling and formation of well-ordered microtubule arrays in the neck region of pavement cells. This restricts cell lateral expansion to generate the narrow neck morphology of pavement cells. Its function is inhibited when it interacts with activated ARAC4/ROP2. Represses ARAC4/ROP2 activation and antagonizes the RIC4-actin pathway that promotes the assembly of cortical actin microfilaments. Acts as a downstream effector of ARAC3/ROP6 which functions in a signaling pathway that negatively regulates clathrin-mediated endocytosis and internalization of PIN1 and PIN2. Required for the asymmetric auxin distribution during root gravitropism and vascular patterning. Positively regulates auxin responses, but negatively regulates ABA responses during lateral root development and primary root elongation. This chain is CRIB domain-containing protein RIC1 (RIC1), found in Arabidopsis thaliana (Mouse-ear cress).